The sequence spans 222 residues: Eukaryotic translation initiation factor 3 subunit K (222 aa).

The PCI domain occupies 46 to 208 (YDLEANLAVL…KIKTKNITEK (163 aa)).

The protein belongs to the eIF-3 subunit K family. As to quaternary structure, component of the eukaryotic translation initiation factor 3 (eIF-3) complex. The eIF-3 complex interacts with pix.

It is found in the cytoplasm. Its function is as follows. Component of the eukaryotic translation initiation factor 3 (eIF-3) complex, which is involved in protein synthesis of a specialized repertoire of mRNAs and, together with other initiation factors, stimulates binding of mRNA and methionyl-tRNAi to the 40S ribosome. The eIF-3 complex specifically targets and initiates translation of a subset of mRNAs involved in cell proliferation. The polypeptide is Eukaryotic translation initiation factor 3 subunit K (Drosophila erecta (Fruit fly)).